Here is a 163-residue protein sequence, read N- to C-terminus: Lipoprotein signal peptidase (163 aa).

4 helical membrane-spanning segments follow: residues 9-29 (AWPW…SKYL), 42-62 (ILPF…SFLG), 67-87 (WQII…ILWL), and 93-113 (SEIM…GNFI). Residues aspartate 123 and aspartate 141 contribute to the active site. Residues 137–157 (FNVADSAICVGVFLLIVHMLL) traverse the membrane as a helical segment.

This sequence belongs to the peptidase A8 family.

The protein resides in the cell inner membrane. It carries out the reaction Release of signal peptides from bacterial membrane prolipoproteins. Hydrolyzes -Xaa-Yaa-Zaa-|-(S,diacylglyceryl)Cys-, in which Xaa is hydrophobic (preferably Leu), and Yaa (Ala or Ser) and Zaa (Gly or Ala) have small, neutral side chains.. Its pathway is protein modification; lipoprotein biosynthesis (signal peptide cleavage). In terms of biological role, this protein specifically catalyzes the removal of signal peptides from prolipoproteins. The protein is Lipoprotein signal peptidase of Coxiella burnetii (strain RSA 331 / Henzerling II).